A 69-amino-acid chain; its full sequence is Large ribosomal subunit protein uL29 (69 aa).

The protein belongs to the universal ribosomal protein uL29 family.

The sequence is that of Large ribosomal subunit protein uL29 from Parasynechococcus marenigrum (strain WH8102).